The primary structure comprises 261 residues: Small ribosomal subunit protein eS4B (261 aa).

The residue at position 32 (Ser-32) is a Phosphoserine. The S4 RNA-binding domain occupies 42–105; it reads LPLIVFLRNR…NENFRLVYDV (64 aa). Lys-62 participates in a covalent cross-link: Glycyl lysine isopeptide (Lys-Gly) (interchain with G-Cter in ubiquitin). Residue Thr-115 is modified to Phosphothreonine. Glycyl lysine isopeptide (Lys-Gly) (interchain with G-Cter in ubiquitin) cross-links involve residues Lys-134, Lys-161, Lys-168, Lys-174, Lys-179, Lys-211, and Lys-233. At Ser-247 the chain carries Phosphoserine.

The protein belongs to the eukaryotic ribosomal protein eS4 family. Component of the small ribosomal subunit (SSU). Mature yeast ribosomes consist of a small (40S) and a large (60S) subunit. The 40S small subunit contains 1 molecule of ribosomal RNA (18S rRNA) and 33 different proteins (encoded by 57 genes). The large 60S subunit contains 3 rRNA molecules (25S, 5.8S and 5S rRNA) and 46 different proteins (encoded by 81 genes).

The protein localises to the cytoplasm. Functionally, component of the ribosome, a large ribonucleoprotein complex responsible for the synthesis of proteins in the cell. The small ribosomal subunit (SSU) binds messenger RNAs (mRNAs) and translates the encoded message by selecting cognate aminoacyl-transfer RNA (tRNA) molecules. The large subunit (LSU) contains the ribosomal catalytic site termed the peptidyl transferase center (PTC), which catalyzes the formation of peptide bonds, thereby polymerizing the amino acids delivered by tRNAs into a polypeptide chain. The nascent polypeptides leave the ribosome through a tunnel in the LSU and interact with protein factors that function in enzymatic processing, targeting, and the membrane insertion of nascent chains at the exit of the ribosomal tunnel. The protein is Small ribosomal subunit protein eS4B of Saccharomyces cerevisiae (strain ATCC 204508 / S288c) (Baker's yeast).